A 469-amino-acid polypeptide reads, in one-letter code: Probable ribonuclease FAU-1 (469 aa).

This sequence belongs to the FAU-1 family.

In terms of biological role, probable RNase involved in rRNA stability through maturation and/or degradation of precursor rRNAs. Binds to RNA in loop regions with AU-rich sequences. The chain is Probable ribonuclease FAU-1 from Pyrococcus horikoshii (strain ATCC 700860 / DSM 12428 / JCM 9974 / NBRC 100139 / OT-3).